The following is a 221-amino-acid chain: Glutathione S-transferase A3 (221 aa).

Ala-2 carries the post-translational modification N-acetylalanine. One can recognise a GST N-terminal domain in the interval 3 to 83; the sequence is GKPVLHYFDG…YIASKYNLYG (81 aa). N6-succinyllysine is present on Lys-4. Glutathione-binding positions include Tyr-9, Arg-45, 54-55, and 67-68; these read QV and QT. Residues 85 to 207 form the GST C-terminal domain; sequence DMKERAIIDM…LQPGSQRKPF (123 aa).

As to quaternary structure, homodimer.

The protein localises to the cytoplasm. It carries out the reaction RX + glutathione = an S-substituted glutathione + a halide anion + H(+). The enzyme catalyses androst-5-ene-3,17-dione = androst-4-ene-3,17-dione. It catalyses the reaction pregn-5-ene-3,20-dione = progesterone. Its function is as follows. Conjugation of reduced glutathione to a wide number of exogenous and endogenous hydrophobic electrophiles. Catalyzes isomerization reactions that contribute to the biosynthesis of steroid hormones. Efficiently catalyze obligatory double-bond isomerizations of delta(5)-androstene-3,17-dione and delta(5)-pregnene-3,20-dione, precursors to testosterone and progesterone, respectively. Has a high catalytic activity for aflatoxin B1-8,9 epoxide. The chain is Glutathione S-transferase A3 from Mus musculus (Mouse).